The sequence spans 172 residues: Ribosome maturation factor RimM (172 aa).

The PRC barrel domain occupies 96–170 (EENEFYFHEI…KITIEVMEGL (75 aa)).

It belongs to the RimM family. As to quaternary structure, binds ribosomal protein uS19.

It is found in the cytoplasm. In terms of biological role, an accessory protein needed during the final step in the assembly of 30S ribosomal subunit, possibly for assembly of the head region. Essential for efficient processing of 16S rRNA. May be needed both before and after RbfA during the maturation of 16S rRNA. It has affinity for free ribosomal 30S subunits but not for 70S ribosomes. The chain is Ribosome maturation factor RimM from Listeria monocytogenes serotype 4b (strain CLIP80459).